Here is a 456-residue protein sequence, read N- to C-terminus: Arginine biosynthesis bifunctional protein ArgJ, mitochondrial (456 aa).

Substrate is bound by residues Thr184, Lys213, Thr224, Glu311, Asn451, and Thr456. Residue Thr224 is the Nucleophile of the active site.

It belongs to the ArgJ family. As to quaternary structure, heterodimer of an alpha and a beta chain. The alpha and beta chains are autoproteolytically processed from a single precursor protein within the mitochondrion.

The protein localises to the mitochondrion matrix. It carries out the reaction N(2)-acetyl-L-ornithine + L-glutamate = N-acetyl-L-glutamate + L-ornithine. The catalysed reaction is L-glutamate + acetyl-CoA = N-acetyl-L-glutamate + CoA + H(+). Its pathway is amino-acid biosynthesis; L-arginine biosynthesis; L-ornithine and N-acetyl-L-glutamate from L-glutamate and N(2)-acetyl-L-ornithine (cyclic): step 1/1. The protein operates within amino-acid biosynthesis; L-arginine biosynthesis; N(2)-acetyl-L-ornithine from L-glutamate: step 1/4. Catalyzes two activities which are involved in the cyclic version of arginine biosynthesis: the synthesis of acetylglutamate from glutamate and acetyl-CoA, and of ornithine by transacetylation between acetylornithine and glutamate. The sequence is that of Arginine biosynthesis bifunctional protein ArgJ, mitochondrial from Aspergillus niger (strain ATCC MYA-4892 / CBS 513.88 / FGSC A1513).